Here is a 521-residue protein sequence, read N- to C-terminus: Ankyrin repeat domain-containing protein 34B (521 aa).

ANK repeat units lie at residues 9-38 (TESN…YINE), 42-79 (RGET…DPNI), 83-113 (FGKT…DPSL), and 117-146 (TGFS…AKGK). Residues 161–188 (QTTRQYLNVPPSPGIEGNNSPSPCTSPS) are disordered. The segment covering 177 to 188 (GNNSPSPCTSPS) has biased composition (polar residues).

The protein belongs to the ANKRD34 family.

The protein localises to the cytoplasm. It localises to the nucleus. This Xenopus laevis (African clawed frog) protein is Ankyrin repeat domain-containing protein 34B (ankrd34b).